Reading from the N-terminus, the 65-residue chain is Small ribosomal subunit protein bS21 (65 aa).

The disordered stretch occupies residues glycine 45–serine 65. A compositionally biased stretch (basic residues) spans lysine 48–glutamine 57.

The protein belongs to the bacterial ribosomal protein bS21 family.

This Chlorobium luteolum (strain DSM 273 / BCRC 81028 / 2530) (Pelodictyon luteolum) protein is Small ribosomal subunit protein bS21.